Reading from the N-terminus, the 447-residue chain is Tubulin beta chain (447 aa).

Positions 11, 69, 138, 142, 143, 144, 204, and 226 each coordinate GTP. A Mg(2+)-binding site is contributed by Glu69. Residues 425–447 (YQDASISEGEEEYEEEVPIEGEE) form a disordered region. A compositionally biased stretch (acidic residues) spans 432–447 (EGEEEYEEEVPIEGEE).

Belongs to the tubulin family. In terms of assembly, dimer of alpha and beta chains. A typical microtubule is a hollow water-filled tube with an outer diameter of 25 nm and an inner diameter of 15 nM. Alpha-beta heterodimers associate head-to-tail to form protofilaments running lengthwise along the microtubule wall with the beta-tubulin subunit facing the microtubule plus end conferring a structural polarity. Microtubules usually have 13 protofilaments but different protofilament numbers can be found in some organisms and specialized cells. Mg(2+) serves as cofactor.

The protein resides in the cytoplasm. The protein localises to the cytoskeleton. Functionally, tubulin is the major constituent of microtubules, a cylinder consisting of laterally associated linear protofilaments composed of alpha- and beta-tubulin heterodimers. Microtubules grow by the addition of GTP-tubulin dimers to the microtubule end, where a stabilizing cap forms. Below the cap, tubulin dimers are in GDP-bound state, owing to GTPase activity of alpha-tubulin. In Botryotinia fuckeliana (Noble rot fungus), this protein is Tubulin beta chain (tubA).